Here is a 325-residue protein sequence, read N- to C-terminus: Beta-ketoacyl-[acyl-carrier-protein] synthase III (325 aa).

Residues Cys116 and His252 contribute to the active site. The interval Gln253 to Arg257 is ACP-binding. The active site involves Asn282.

The protein belongs to the thiolase-like superfamily. FabH family. As to quaternary structure, homodimer.

The protein resides in the cytoplasm. The catalysed reaction is butanoyl-CoA + malonyl-[ACP] + H(+) = 3-oxohexanoyl-[ACP] + CO2 + CoA. The enzyme catalyses hexanoyl-CoA + malonyl-[ACP] + H(+) = 3-oxooctanoyl-[ACP] + CO2 + CoA. It catalyses the reaction octanoyl-CoA + malonyl-[ACP] + H(+) = 3-oxodecanoyl-[ACP] + CO2 + CoA. It carries out the reaction decanoyl-CoA + malonyl-[ACP] + H(+) = 3-oxododecanoyl-[ACP] + CO2 + CoA. The catalysed reaction is 2-methylpropanoyl-CoA + malonyl-[ACP] + H(+) = 4-methyl-3-oxopentanoyl-[ACP] + CO2 + CoA. The enzyme catalyses 3-methylbutanoyl-CoA + malonyl-[ACP] + H(+) = 5-methyl-3-oxohexanoyl-[ACP] + CO2 + CoA. It catalyses the reaction malonyl-[ACP] + acetyl-CoA + H(+) = 3-oxobutanoyl-[ACP] + CO2 + CoA. Its pathway is lipid metabolism; fatty acid biosynthesis. Functionally, catalyzes the condensation reaction of fatty acid synthesis by the addition to an acyl acceptor of two carbons from malonyl-ACP. Catalyzes the first condensation reaction which initiates fatty acid synthesis and may therefore play a role in governing the total rate of fatty acid production. Possesses both acetoacetyl-ACP synthase and acetyl transacylase activities. Can use a wide range of acyl-CoAs as the primer substrate in vitro, with a slight preference for short, medium-straight chain acyl-CoAs. Can also use branched-chain acyl-CoAs and acetyl-CoA. In Xanthomonas campestris pv. campestris (strain 8004), this protein is Beta-ketoacyl-[acyl-carrier-protein] synthase III.